A 165-amino-acid polypeptide reads, in one-letter code: 16S rRNA aminocarboxypropyltransferase (165 aa).

S-adenosyl-L-methionine contacts are provided by Thr-17, Leu-62, Leu-83, and Thr-102.

It belongs to the TDD superfamily. TSR3 family.

It localises to the cytoplasm. The catalysed reaction is an N(1)-methylpseudouridine in rRNA + S-adenosyl-L-methionine = N(1)-methyl-N(3)-[(3S)-3-amino-3-carboxypropyl]pseudouridine in rRNA + S-methyl-5'-thioadenosine + H(+). Its function is as follows. Aminocarboxypropyltransferase that catalyzes the aminocarboxypropyl transfer on pseudouridine corresponding to position 914 in M.jannaschii 16S rRNA. It constitutes the last step in biosynthesis of the hypermodified N1-methyl-N3-(3-amino-3-carboxypropyl) pseudouridine (m1acp3-Psi). The chain is 16S rRNA aminocarboxypropyltransferase from Halobacterium salinarum (strain ATCC 700922 / JCM 11081 / NRC-1) (Halobacterium halobium).